A 220-amino-acid polypeptide reads, in one-letter code: Vesicle-associated membrane protein 7 (220 aa).

At 2-188 (AILFAVVARG…ARAMCMKNLK (187 aa)) the chain is on the cytoplasmic side. Residues 7 to 110 (VVARGTTILA…AMNSEFSSVL (104 aa)) form the Longin domain. One can recognise a v-SNARE coiled-coil homology domain in the interval 125–185 (QVAETQAQVD…RNLARAMCMK (61 aa)). The chain crosses the membrane as a helical; Anchor for type IV membrane protein span at residues 189–209 (LTIIIIIVSIVIIYIIVSAAC). Residues 210–220 (GGLAWPSCVQK) lie on the Vesicular side of the membrane.

The protein belongs to the synaptobrevin family.

The protein resides in the cytoplasmic vesicle. The protein localises to the secretory vesicle membrane. It is found in the golgi apparatus. Its subcellular location is the trans-Golgi network membrane. It localises to the late endosome membrane. The protein resides in the lysosome membrane. The protein localises to the endoplasmic reticulum membrane. It is found in the phagosome membrane. Its subcellular location is the synapse. It localises to the synaptosome. Its function is as follows. Involved in the targeting and/or fusion of transport vesicles to their target membrane during transport of proteins from the early endosome to the lysosome. Required for heterotypic fusion of late endosomes with lysosomes and homotypic lysosomal fusion. Required for calcium regulated lysosomal exocytosis. Involved in the export of chylomicrons from the endoplasmic reticulum to the cis Golgi. Required for focal exocytosis of late endocytic vesicles during phagosome formation. This chain is Vesicle-associated membrane protein 7, found in Gallus gallus (Chicken).